An 87-amino-acid polypeptide reads, in one-letter code: Small ribosomal subunit protein bS20 (87 aa).

The interval 1–26 (MANTAQAKKRVRQNIKQRERNSGLRS) is disordered.

This sequence belongs to the bacterial ribosomal protein bS20 family.

In terms of biological role, binds directly to 16S ribosomal RNA. In Nitrosomonas eutropha (strain DSM 101675 / C91 / Nm57), this protein is Small ribosomal subunit protein bS20.